Consider the following 183-residue polypeptide: Ribulose bisphosphate carboxylase small subunit, chloroplastic 3 (183 aa).

A chloroplast-targeting transit peptide spans 1 to 57; that stretch reads MASSLMSNAATTMAAATTTAQANMVAPFNGLKSVSAFPVTRKNNDITSVASNGGRVQ.

The protein belongs to the RuBisCO small chain family. Heterohexadecamer of 8 large and 8 small subunits.

Its subcellular location is the plastid. The protein resides in the chloroplast. Functionally, ruBisCO catalyzes two reactions: the carboxylation of D-ribulose 1,5-bisphosphate, the primary event in carbon dioxide fixation, as well as the oxidative fragmentation of the pentose substrate. Both reactions occur simultaneously and in competition at the same active site. Although the small subunit is not catalytic it is essential for maximal activity. This chain is Ribulose bisphosphate carboxylase small subunit, chloroplastic 3, found in Mesembryanthemum crystallinum (Common ice plant).